Reading from the N-terminus, the 88-residue chain is Small ribosomal subunit protein bS20 (88 aa).

Belongs to the bacterial ribosomal protein bS20 family.

Its function is as follows. Binds directly to 16S ribosomal RNA. This chain is Small ribosomal subunit protein bS20, found in Desulforudis audaxviator (strain MP104C).